Reading from the N-terminus, the 539-residue chain is Glucose-6-phosphate isomerase (539 aa).

Catalysis depends on glutamate 353, which acts as the Proton donor. Active-site residues include histidine 384 and lysine 505.

Belongs to the GPI family.

Its subcellular location is the cytoplasm. It carries out the reaction alpha-D-glucose 6-phosphate = beta-D-fructose 6-phosphate. Its pathway is carbohydrate biosynthesis; gluconeogenesis. The protein operates within carbohydrate degradation; glycolysis; D-glyceraldehyde 3-phosphate and glycerone phosphate from D-glucose: step 2/4. Its function is as follows. Catalyzes the reversible isomerization of glucose-6-phosphate to fructose-6-phosphate. This chain is Glucose-6-phosphate isomerase, found in Ralstonia pickettii (strain 12J).